A 254-amino-acid chain; its full sequence is MFAFLTSKKVGILPSRWGSSRFPGKPLAKILGKTLVQRSYENALSSQSLDCVVVATDDQRIFDHVVEFGGLCVMTSTSCANGTERVEEVVSRHFPQAEIVVNIQGDEPCLSPTVIDGLVSTLENNPAADMVTSVTETTDPEAILTDHKVKCVFDKNGKALYFSRSAIPHNFKHPTPIYLHIGVYAFRKAFLSEYVKIPPSSLSLAEDLEQLRVLEIGRSIYVHVVQNATGPSVDYPEDITKVEQYLLCLSKASF.

The protein belongs to the KdsB family.

The protein localises to the cytoplasm. The catalysed reaction is 3-deoxy-alpha-D-manno-oct-2-ulosonate + CTP = CMP-3-deoxy-beta-D-manno-octulosonate + diphosphate. It functions in the pathway nucleotide-sugar biosynthesis; CMP-3-deoxy-D-manno-octulosonate biosynthesis; CMP-3-deoxy-D-manno-octulosonate from 3-deoxy-D-manno-octulosonate and CTP: step 1/1. The protein operates within bacterial outer membrane biogenesis; lipopolysaccharide biosynthesis. Its function is as follows. Activates KDO (a required 8-carbon sugar) for incorporation into bacterial lipopolysaccharide in Gram-negative bacteria. This is 3-deoxy-manno-octulosonate cytidylyltransferase from Chlamydia trachomatis serovar A (strain ATCC VR-571B / DSM 19440 / HAR-13).